Reading from the N-terminus, the 510-residue chain is GMP synthase [glutamine-hydrolyzing] (510 aa).

In terms of domain architecture, Glutamine amidotransferase type-1 spans 5-195 (KILVLDFGGQ…LFKVCGVKGT (191 aa)). C82 functions as the Nucleophile in the catalytic mechanism. Active-site residues include H169 and E171. The GMPS ATP-PPase domain maps to 196 to 385 (WNMADFINEE…LGLPDEIVWR (190 aa)). Residue 223-229 (SGGVDSA) participates in ATP binding.

Homodimer.

The enzyme catalyses XMP + L-glutamine + ATP + H2O = GMP + L-glutamate + AMP + diphosphate + 2 H(+). The protein operates within purine metabolism; GMP biosynthesis; GMP from XMP (L-Gln route): step 1/1. Its function is as follows. Catalyzes the synthesis of GMP from XMP. In Halothermothrix orenii (strain H 168 / OCM 544 / DSM 9562), this protein is GMP synthase [glutamine-hydrolyzing].